We begin with the raw amino-acid sequence, 176 residues long: Small ribosomal subunit protein uS5 (176 aa).

One can recognise an S5 DRBM domain in the interval 11 to 74 (LSEVLVDVNR…QAAKKRMMKV (64 aa)).

It belongs to the universal ribosomal protein uS5 family. Part of the 30S ribosomal subunit. Contacts proteins S4 and S8.

With S4 and S12 plays an important role in translational accuracy. Its function is as follows. Located at the back of the 30S subunit body where it stabilizes the conformation of the head with respect to the body. In Rickettsia akari (strain Hartford), this protein is Small ribosomal subunit protein uS5.